Consider the following 1523-residue polypeptide: Dicer-like protein 1 (1523 aa).

The span at 24-38 shows a compositional bias: polar residues; the sequence is LNLSGERTISTTEPT. Residues 24-58 form a disordered region; sequence LNLSGERTISTTEPTEGNDSSSEESGDNEQISTQR. The region spanning 123–304 is the Helicase ATP-binding domain; sequence LFERAKSQNT…ESATKLEVLL (182 aa). ATP is bound at residue 136–143; sequence LDTGSGKT. The short motif at 249 to 252 is the DEAH box element; that stretch reads DEAH. One can recognise a Helicase C-terminal domain in the interval 444-617; that stretch reads LLRQKLIKYF…GIDSEIDSIL (174 aa). Residues 640–730 enclose the Dicer dsRNA-binding fold domain; that stretch reads ALAILARYAS…NSVYHRRLPA (91 aa). Positions 879–1007 constitute a PAZ domain; sequence ELLHLVHENE…VCIEPLRISA (129 aa). RNase III domains are found at residues 1031–1190 and 1241–1392; these read IALE…LSGG and GRKV…VDSD. E1281, D1378, and E1381 together coordinate Mg(2+). The DRBM domain maps to 1426–1494; that stretch reads TFLQNRLTNE…SEKALSVLEN (69 aa). Residues C1438, H1465, C1506, and C1508 each coordinate Zn(2+).

The protein belongs to the helicase family. Dicer subfamily. Mg(2+) is required as a cofactor. Mn(2+) serves as cofactor.

Dicer-like endonuclease involved in cleaving double-stranded RNA in the RNA interference (RNAi) pathway. Produces 21 to 25 bp dsRNAs (siRNAs) which target the selective destruction of homologous RNAs leading to sequence-specific suppression of gene expression, called post-transcriptional gene silencing (PTGS). Part of a broad host defense response against viral infection and transposons. In Aspergillus oryzae (strain ATCC 42149 / RIB 40) (Yellow koji mold), this protein is Dicer-like protein 1 (dcl1).